Consider the following 356-residue polypeptide: Neurogenic differentiation factor 1 (356 aa).

The tract at residues 1–94 (MTKSYSESGL…GPKKKKMTKA (94 aa)) is disordered. Over residues 58-78 (EEEDEDEDLEEEEEEEEEDDD) the composition is skewed to acidic residues. Residues 81–93 (PKRRGPKKKKMTK) are compositionally biased toward basic residues. The short motif at 87-93 (KKKKMTK) is the Nuclear localization signal element. One can recognise a bHLH domain in the interval 101–153 (LRRMKANARERNRMHGLNAALDNLRKVVPCYSKTQKLSKIETLRLAKNYIWAL). Phosphoserine occurs at positions 162, 259, 266, and 274. Position 335 is a phosphoserine; by CaMK2 (Ser335).

In terms of assembly, efficient DNA-binding requires dimerization with another bHLH protein. Heterodimer with TCF3/E47; the heterodimer is inhibited in presence of ID2, but not NR0B2, to E-box element. Interacts with EP300; the interaction is inhibited by NR0B2. Interacts with RREB1. Interacts with ATOH8. Post-translationally, phosphorylated. In islet cells, phosphorylated on Ser-274 upon glucose stimulation; which may be required for nuclear localization. In activated neurons, phosphorylated on Ser-335; which promotes dendritic growth. Phosphorylated by MAPK1; phosphorylation regulates heterodimerization and DNA-binding activities. Phosphorylation on Ser-266 and Ser-274 increases transactivation on the insulin promoter in glucose-stimulated insulinoma cells.

It is found in the cytoplasm. The protein resides in the nucleus. In terms of biological role, acts as a transcriptional activator: mediates transcriptional activation by binding to E box-containing promoter consensus core sequences 5'-CANNTG-3'. Associates with the p300/CBP transcription coactivator complex to stimulate transcription of the secretin gene as well as the gene encoding the cyclin-dependent kinase inhibitor CDKN1A. Contributes to the regulation of several cell differentiation pathways, like those that promote the formation of early retinal ganglion cells, inner ear sensory neurons, granule cells forming either the cerebellum or the dentate gyrus cell layer of the hippocampus, endocrine islet cells of the pancreas and enteroendocrine cells of the small intestine. Together with PAX6 or SIX3, is required for the regulation of amacrine cell fate specification. Also required for dendrite morphogenesis and maintenance in the cerebellar cortex. Associates with chromatin to enhancer regulatory elements in genes encoding key transcriptional regulators of neurogenesis. This is Neurogenic differentiation factor 1 (NEUROD1) from Homo sapiens (Human).